The chain runs to 334 residues: Ketol-acid reductoisomerase (NADP(+)) (334 aa).

In terms of domain architecture, KARI N-terminal Rossmann spans 3–183; sequence ATIYYENDAD…GGTRGGVIET (181 aa). Residues 26–29, Arg49, Ser52, and 84–87 each bind NADP(+); these read YGSQ and DEVQ. His109 is a catalytic residue. Gly135 contributes to the NADP(+) binding site. The 146-residue stretch at 184-329 folds into the KARI C-terminal knotted domain; it reads TFAEETETDL…LGLRRMMNWI (146 aa). Asp192, Glu196, Glu228, and Glu232 together coordinate Mg(2+). Substrate is bound at residue Ser253.

Belongs to the ketol-acid reductoisomerase family. Mg(2+) serves as cofactor.

The catalysed reaction is (2R)-2,3-dihydroxy-3-methylbutanoate + NADP(+) = (2S)-2-acetolactate + NADPH + H(+). The enzyme catalyses (2R,3R)-2,3-dihydroxy-3-methylpentanoate + NADP(+) = (S)-2-ethyl-2-hydroxy-3-oxobutanoate + NADPH + H(+). Its pathway is amino-acid biosynthesis; L-isoleucine biosynthesis; L-isoleucine from 2-oxobutanoate: step 2/4. The protein operates within amino-acid biosynthesis; L-valine biosynthesis; L-valine from pyruvate: step 2/4. Involved in the biosynthesis of branched-chain amino acids (BCAA). Catalyzes an alkyl-migration followed by a ketol-acid reduction of (S)-2-acetolactate (S2AL) to yield (R)-2,3-dihydroxy-isovalerate. In the isomerase reaction, S2AL is rearranged via a Mg-dependent methyl migration to produce 3-hydroxy-3-methyl-2-ketobutyrate (HMKB). In the reductase reaction, this 2-ketoacid undergoes a metal-dependent reduction by NADPH to yield (R)-2,3-dihydroxy-isovalerate. The sequence is that of Ketol-acid reductoisomerase (NADP(+)) from Rhodopirellula baltica (strain DSM 10527 / NCIMB 13988 / SH1).